The primary structure comprises 242 residues: Small ribosomal subunit protein eS4 (242 aa).

The region spanning 43–106 is the S4 RNA-binding domain; the sequence is LPLMIIVRDI…GDVYRVLPDE (64 aa).

This sequence belongs to the eukaryotic ribosomal protein eS4 family.

The chain is Small ribosomal subunit protein eS4 (rps4e) from Methanothermobacter thermautotrophicus (strain ATCC 29096 / DSM 1053 / JCM 10044 / NBRC 100330 / Delta H) (Methanobacterium thermoautotrophicum).